Reading from the N-terminus, the 609-residue chain is Membrane-bound O-acyltransferase GUP2 (609 aa).

The N-terminal stretch at 1 to 18 is a signal peptide; the sequence is MSMLRIWSCIVHFFSVQA. Residues 19-75 are Lumenal-facing; it reads LDSRIKPDIEFKRRQRIFINSSKEENGSSSSAVTVTRNPVLSSNSPSPPLWNTWEFR. The helical transmembrane segment at 76-96 threads the bilayer; it reads LYYLAFTVVVPFMIKAALATS. Residues 97–133 lie on the Cytoplasmic side of the membrane; that stretch reads SESNPNYYKFSGLLAHGWILGRKVDNSDPQYRFFRSN. The helical transmembrane segment at 134–154 threads the bilayer; sequence FFLLAILILLQIILKKVFVKF. The Lumenal segment spans residues 155–169; sequence SKIPKTKFDFACGLV. Residues 170–190 traverse the membrane as a helical segment; that stretch reads FVCFMYGINSVKLFTHAFIFF. Residues 191-200 are Cytoplasmic-facing; the sequence is TLAHSLKRKR. A helical transmembrane segment spans residues 201-221; that stretch reads LIAAFAIWSYGIFTLFINQKM. Topologically, residues 222-324 are lumenal; sequence KNLPFNNIAI…VAEHHIQDYN (103 aa). The chain crosses the membrane as a helical span at residues 325 to 345; the sequence is FINFIAYITYAPLFLVGPIIT. Topologically, residues 346–371 are cytoplasmic; the sequence is FNDYLYQSENKLPSLTKKNIGFYALK. The helical transmembrane segment at 372–392 threads the bilayer; that stretch reads VFSSLLLMEIILHYIYVGAIA. Over 393–406 the chain is Lumenal; the sequence is RTKAWNNDTPLQQA. Residues 407 to 427 form a helical membrane-spanning segment; that stretch reads MIALFNLNIMYLKLLIPWRLF. At 428-474 the chain is on the cytoplasmic side; it reads RLWAMVDGIDAPENMLRCVDNNYSTVGFWRAWHTSFNKWVIRYIYVP. The chain crosses the membrane as a helical span at residues 475-495; it reads FGGSNNKILTSFAVFSFVAIW. His496 is a catalytic residue. At 496–502 the chain is on the lumenal side; the sequence is HDIQLRV. Residues 503–523 form a helical membrane-spanning segment; it reads LFWGWLTVLLLLGETYITNCF. The Cytoplasmic segment spans residues 524–533; that stretch reads SRYRFRSWYR. A helical membrane pass occupies residues 534 to 554; sequence FVCGIGAAINICMMMIINVYG. The Lumenal portion of the chain corresponds to 555–575; the sequence is FCLGAEGTKLLLKGIFNNSHS. Residues 576-596 form a helical membrane-spanning segment; that stretch reads PEFLTAVMVSLFIAVQVMFEI. The Cytoplasmic portion of the chain corresponds to 597 to 609; the sequence is REEEKRHGINLKC.

The protein belongs to the membrane-bound acyltransferase family.

The protein localises to the endoplasmic reticulum membrane. Functionally, probable membrane-bound O-acyltransferase. Together with GUP1, has an influence on the chemical composition of the yeast extracellular matrix (yECM) in yeast multicellular aggregates, such as biofilms and colonies. This is Membrane-bound O-acyltransferase GUP2 (GUP2) from Saccharomyces cerevisiae (strain ATCC 204508 / S288c) (Baker's yeast).